A 607-amino-acid chain; its full sequence is DNA mismatch repair protein MutL (607 aa).

This sequence belongs to the DNA mismatch repair MutL/HexB family.

Functionally, this protein is involved in the repair of mismatches in DNA. It is required for dam-dependent methyl-directed DNA mismatch repair. May act as a 'molecular matchmaker', a protein that promotes the formation of a stable complex between two or more DNA-binding proteins in an ATP-dependent manner without itself being part of a final effector complex. This Paramagnetospirillum magneticum (strain ATCC 700264 / AMB-1) (Magnetospirillum magneticum) protein is DNA mismatch repair protein MutL.